The primary structure comprises 468 residues: Chitoporin (468 aa).

The N-terminal stretch at 1-32 (MRTFSGKRSTLALAIAGVTAMSGFMAMPEARA) is a signal peptide.

It belongs to the outer membrane porin (Opr) (TC 1.B.25) family.

Its subcellular location is the cell outer membrane. Functionally, involved in the uptake of chitosugars. This Escherichia coli (strain K12) protein is Chitoporin (chiP).